Consider the following 81-residue polypeptide: uncharacterized protein (81 aa).

This is an uncharacterized protein from Bacillus anthracis.